The primary structure comprises 66 residues: Large ribosomal subunit protein bL31 (66 aa).

Zn(2+) is bound by residues Cys16, Cys18, Cys36, and Cys39.

Belongs to the bacterial ribosomal protein bL31 family. Type A subfamily. In terms of assembly, part of the 50S ribosomal subunit. The cofactor is Zn(2+).

In terms of biological role, binds the 23S rRNA. This Campylobacter jejuni subsp. jejuni serotype O:6 (strain 81116 / NCTC 11828) protein is Large ribosomal subunit protein bL31.